The following is a 393-amino-acid chain: MYLIGEALIGEGSELAHVDLIVGDKNGPVGMAFANALSQLSAGHTPLLAVVRPNLLTKPATVVIPKVTLKNEGQVNQMFGPVQAAVAKAVADAVEEGLFGDININDICILASAFLHPSAKDYNRIYRYNYGATKLAISRAFEEFPDEKTLIHEKDRAAHAVMGFKVPRLWDPPYLQVALDIVDLGKLRSVLSSLPENDHLIIEAGTPLIKKFGLNVISEIRAVKPNAFIVADMKILDTGNLEARMAADSSADAVVMSGLAPASTIEKAITEARKTGIYSVIDMLNVEDPVGLIASLKVKPDIVELHRAIDAEHTSHAWGNIGDIKKAAGGKLLVATAGGIRVPVVKEALKTGADILVVGRAITASKDVRHAAEEFLEQLNKEEIDQFRIMTDF.

A formaldehyde-activating enzyme region spans residues 1–161 (MYLIGEALIG…HEKDRAAHAV (161 aa)). Histidine 17 acts as the Proton donor in catalysis. Aspartate 19, leucine 48, lysine 66, threonine 68, and glutamine 83 together coordinate substrate. Residues 162 to 393 (MGFKVPRLWD…IDQFRIMTDF (232 aa)) form a 3-hexulose-6-phosphate synthase region.

In the N-terminal section; belongs to the formaldehyde-activating enzyme family. This sequence in the C-terminal section; belongs to the HPS/KGPDC family. HPS subfamily.

The enzyme catalyses 5,6,7,8-tetrahydromethanopterin + formaldehyde = 5,10-methylenetetrahydromethanopterin + H2O. It carries out the reaction D-ribulose 5-phosphate + formaldehyde = D-arabino-hex-3-ulose 6-phosphate. Its pathway is carbohydrate biosynthesis; D-ribose 5-phosphate biosynthesis. Catalyzes the condensation of formaldehyde with tetrahydromethanopterin (H(4)MPT) to 5,10-methylenetetrahydromethanopterin. Functionally, catalyzes the reversible formation of ribulose-5-phosphate and formaldehyde from 3-hexulose-6-phosphate. The polypeptide is Bifunctional enzyme Fae/Hps (Methanospirillum hungatei JF-1 (strain ATCC 27890 / DSM 864 / NBRC 100397 / JF-1)).